Reading from the N-terminus, the 316-residue chain is Ribosomal RNA small subunit methyltransferase H (316 aa).

S-adenosyl-L-methionine is bound by residues 35 to 37, Asp55, Phe84, Asp105, and Gln112; that span reads AGH.

This sequence belongs to the methyltransferase superfamily. RsmH family.

The protein localises to the cytoplasm. It catalyses the reaction cytidine(1402) in 16S rRNA + S-adenosyl-L-methionine = N(4)-methylcytidine(1402) in 16S rRNA + S-adenosyl-L-homocysteine + H(+). Its function is as follows. Specifically methylates the N4 position of cytidine in position 1402 (C1402) of 16S rRNA. This is Ribosomal RNA small subunit methyltransferase H from Streptococcus uberis (strain ATCC BAA-854 / 0140J).